The sequence spans 122 residues: UPF0102 protein Smed_3545 (122 aa).

This sequence belongs to the UPF0102 family.

The polypeptide is UPF0102 protein Smed_3545 (Sinorhizobium medicae (strain WSM419) (Ensifer medicae)).